A 364-amino-acid polypeptide reads, in one-letter code: Growth hormone secretagogue receptor type 1 (364 aa).

Over 1–40 the chain is Extracellular; that stretch reads MWNATPSEEPEPNVTLDLDWDASPGNDSLSDELLPLFPAP. 2 N-linked (GlcNAc...) asparagine glycosylation sites follow: asparagine 13 and asparagine 26. A helical membrane pass occupies residues 41 to 66; it reads LLAGVTATCVALFVVGISGNLLTMLV. The Cytoplasmic portion of the chain corresponds to 67-72; the sequence is VSRFRE. Residues 73-96 traverse the membrane as a helical segment; sequence LRTTTNLYLSSMAFSDLLIFLCMP. Over 97 to 117 the chain is Extracellular; the sequence is LDLVRLWQYRPWNFGDLLCKL. Cysteine 115 and cysteine 197 are disulfide-bonded. The chain crosses the membrane as a helical span at residues 118–139; the sequence is FQFVSESCTYATVLTITALSVE. The Cytoplasmic segment spans residues 140–162; it reads RYFAICFPLRAKVVVTKGRVKLV. The chain crosses the membrane as a helical span at residues 163-183; it reads ILVIWAVAFCSAGPIFVLVGV. Over 184 to 211 the chain is Extracellular; that stretch reads EHENGTDPRDTNECRATEFAVRSGLLTV. N-linked (GlcNAc...) asparagine glycosylation occurs at asparagine 187. A helical transmembrane segment spans residues 212-235; it reads MVWVSSVFFFLPVFCLTVLYSLIG. Over 236 to 263 the chain is Cytoplasmic; it reads RKLWRRRGDAAVGSSLRDQNHKQTVKML. The helical transmembrane segment at 264 to 285 threads the bilayer; sequence AVVVFAFILCWLPFHVGRYLFS. At 286–302 the chain is on the extracellular side; that stretch reads KSFEPGSLEIAQISQYC. The helical transmembrane segment at 303-326 threads the bilayer; it reads NLVSFVLFYLSAAINPILYNIMSK. Residues 327 to 364 lie on the Cytoplasmic side of the membrane; it reads KYRVAVFKLLGFESFSQRKLSTLKDESSRAWTKSSINT.

This sequence belongs to the G-protein coupled receptor 1 family.

It localises to the cell membrane. In terms of biological role, receptor for ghrelin, coupled to G-alpha-11 proteins. Stimulates growth hormone secretion. Also binds other growth hormone releasing peptides (GHRP) (e.g. Met-enkephalin and GHRP-6) as well as non-peptide, low molecular weight secretagogues (e.g. L-692,429, MK-0677, adenosine). In Mus musculus (Mouse), this protein is Growth hormone secretagogue receptor type 1 (Ghsr).